We begin with the raw amino-acid sequence, 253 residues long: MEVAAPLLCLAAAVLVWGVLWVWGSWERMTRPEQAGLPGGGSRTLLVTAHPDDEAMFFAPTILGLARLRHQLFLLCFSAGNYYNQGEIRKKELLQSCDVLGIPPSNVMIIENRDFPDDPDVRWDPDRAADVLLQHVEANGIKLVVTFDEGGVSGHSNHVALNAAVRTLQAEGKLPKGCSVLTLQSVNLLRKYLCLLDLPCSLLLARDALFVLTQREAAQAQRAMSCHRSQLLWFRRLYMLFSRYMRINSLNFL.

Residues 3 to 23 traverse the membrane as a helical segment; that stretch reads VAAPLLCLAAAVLVWGVLWVW. Topologically, residues 24 to 253 are cytoplasmic; it reads GSWERMTRPE…YMRINSLNFL (230 aa).

The protein belongs to the PIGL family.

Its subcellular location is the endoplasmic reticulum membrane. It carries out the reaction a 6-(N-acetyl-alpha-D-glucosaminyl)-1-(1,2-diacyl-sn-glycero-3-phospho)-1D-myo-inositol + H2O = a 6-(alpha-D-glucosaminyl)-1-(1,2-diacyl-sn-glycero-3-phospho)-1D-myo-inositol + acetate. Its pathway is glycolipid biosynthesis; glycosylphosphatidylinositol-anchor biosynthesis. Its function is as follows. Catalyzes the second step of glycosylphosphatidylinositol (GPI) biosynthesis, which is the de-N-acetylation of N-acetylglucosaminyl-phosphatidylinositol. In Bos taurus (Bovine), this protein is N-acetylglucosaminyl-phosphatidylinositol de-N-acetylase (PIGL).